Reading from the N-terminus, the 178-residue chain is Deoxycytidylate deaminase (178 aa).

Residues 14–145 (EWPEYFMAVA…DEATAARLLF (132 aa)) form the CMP/dCMP-type deaminase domain. His84 contacts Zn(2+). Glu86 serves as the catalytic Proton donor. Zn(2+) contacts are provided by Cys110 and Cys113. Ser174 is subject to Phosphoserine.

Belongs to the cytidine and deoxycytidylate deaminase family. Homohexamer. Zn(2+) is required as a cofactor.

The enzyme catalyses dCMP + H2O + H(+) = dUMP + NH4(+). The catalysed reaction is 5-hydroxymethyl-dCMP + H2O + H(+) = 5-hydroxymethyl-dUMP + NH4(+). Its activity is regulated as follows. Allosteric enzyme whose activity is greatly influenced by the end products of its metabolic pathway, dCTP and dTTP. Catalyzes the deamination of dCMP to dUMP, providing the nucleoside monophosphate substrate for the thymidylate synthase/TYMS. Also, part of a nucleotide salvage pathway that eliminates epigenetically modified 5-hydroxymethyl-dCMP (hmdCMP) in a two-step process entailing deamination to cytotoxic 5-hydroxymethyl-dUMP (hmdUMP), followed by its hydrolysis into 5-hydroxymethyluracil (hmU) and 2-deoxy-D-ribose 5-phosphate (deoxyribosephosphate). Catalyzes the first step in that pathway, the deamination of 5-hydroxymethyl-dCMP (hmdCMP). The sequence is that of Deoxycytidylate deaminase from Homo sapiens (Human).